Reading from the N-terminus, the 213-residue chain is 3,4-dihydroxy-2-butanone 4-phosphate synthase (213 aa).

D-ribulose 5-phosphate contacts are provided by residues 37–38 (RE), Asp42, 150–154 (RPGHT), and Glu174. Mg(2+) is bound at residue Glu38. His153 lines the Mg(2+) pocket.

The protein belongs to the DHBP synthase family. In terms of assembly, homodimer. Mg(2+) is required as a cofactor. It depends on Mn(2+) as a cofactor.

It catalyses the reaction D-ribulose 5-phosphate = (2S)-2-hydroxy-3-oxobutyl phosphate + formate + H(+). Its pathway is cofactor biosynthesis; riboflavin biosynthesis; 2-hydroxy-3-oxobutyl phosphate from D-ribulose 5-phosphate: step 1/1. Its function is as follows. Catalyzes the conversion of D-ribulose 5-phosphate to formate and 3,4-dihydroxy-2-butanone 4-phosphate. In Clostridium botulinum (strain ATCC 19397 / Type A), this protein is 3,4-dihydroxy-2-butanone 4-phosphate synthase.